The chain runs to 417 residues: Serine/threonine-protein phosphatase 4 regulatory subunit 2 (417 aa).

Residues 141–417 (KNNSNSLNRM…EVTDDPMEQD (277 aa)) are disordered. Polar residues-rich tracts occupy residues 158-170 (NSPN…NING) and 186-196 (APLTTNGLPES). Serine 159 carries the phosphoserine modification. Basic and acidic residues predominate over residues 197-213 (TDSKDSELQLSEEKGHS). Residues 214–226 (DSSASESEVSLLS) show a composition bias toward low complexity. Serine 226 carries the phosphoserine modification. A compositionally biased stretch (basic and acidic residues) spans 243 to 258 (HEVKRLKFDKEGDVRE). Residues 259–268 (TASQTVSGEV) show a composition bias toward polar residues. Basic and acidic residues predominate over residues 283–296 (PDKDRESRTRQHCT). The span at 297 to 313 (EEEEEEEEEEEEEEEES) shows a compositional bias: acidic residues. The span at 320–329 (MVPERKNQEK) shows a compositional bias: basic and acidic residues. Residues 367 to 376 (SAGASRSGSD) show a composition bias toward low complexity. Over residues 378–392 (LETQESGGPPSSKTG) the composition is skewed to polar residues. A compositionally biased stretch (acidic residues) spans 402-417 (ESEEATEVTDDPMEQD).

The protein belongs to the PPP4R2 family. In terms of assembly, serine/threonine-protein phosphatase 4 (PP4) occurs in different assemblies of the catalytic and one or more regulatory subunits. Component of the PP4 complexes PPP4C-PPP4R2, PPP4C-PPP4R2-PPP4R3A and PPP4C-PPP4R2-PPP4R3B. The PPP4C-PPP4R2 complex appears to be a tetramer composed of 2 molecules of PPP4C and 2 molecules of PPP4R2. Interacts with DDX20/GEMIN3 and GEMIN4. Interacts with RPA2; this DNA damage-dependent interaction recruits PPP4C leading to RPA2 dephosphorylation.

Its subcellular location is the cytoplasm. It is found in the cytoskeleton. The protein resides in the microtubule organizing center. It localises to the centrosome. The protein localises to the nucleus. In terms of biological role, regulatory subunit of serine/threonine-protein phosphatase 4 (PP4). May regulate the activity of PPP4C at centrosomal microtubule organizing centers. Its interaction with the SMN complex leads to enhance the temporal localization of snRNPs, suggesting a role of PPP4C in maturation of spliceosomal snRNPs. The PPP4C-PPP4R2-PPP4R3A PP4 complex specifically dephosphorylates H2AX phosphorylated on 'Ser-140' (gamma-H2AX) generated during DNA replication and required for DNA double strand break repair. Mediates RPA2 dephosphorylation by recruiting PPP4C to RPA2 in a DNA damage-dependent manner. RPA2 dephosphorylation is required for the efficient RPA2-mediated recruitment of RAD51 to chromatin following double strand breaks, an essential step for DNA repair. The chain is Serine/threonine-protein phosphatase 4 regulatory subunit 2 (Ppp4r2) from Mus musculus (Mouse).